We begin with the raw amino-acid sequence, 504 residues long: 13S globulin seed storage protein 2 (504 aa).

Positions 1–20 (MSTKLILSFSLCLMVLSCSA) are cleaved as a signal peptide. Disulfide bonds link Cys46-Cys79 and Cys122-Cys320. Positions 51 to 265 (LTASEPSRRV…FRDVDRETIS (215 aa)) constitute a Cupin type-1 1 domain. 3 disordered regions span residues 128-158 (SDSE…GDQH), 214-237 (GQSQ…DDEA), and 289-314 (QDFE…RSNG). Composition is skewed to basic and acidic residues over residues 144–158 (RQSE…GDQH) and 218–231 (RETR…QSRE). In terms of domain architecture, Cupin type-1 2 spans 326 to 475 (RNFNTPTNTY…SYDISTKEAY (150 aa)).

The protein belongs to the 11S seed storage protein (globulins) family. Hexamer; each subunit is composed of an acidic and a basic chain derived from a single precursor and linked by a disulfide bond.

Seed storage protein. The chain is 13S globulin seed storage protein 2 (FA18) from Fagopyrum esculentum (Common buckwheat).